Here is a 195-residue protein sequence, read N- to C-terminus: GTP-dependent dephospho-CoA kinase (195 aa).

Residues Asp-49, Val-50, Asp-68, Glu-127, and Asp-150 each coordinate GTP.

The protein belongs to the GTP-dependent DPCK family.

It catalyses the reaction 3'-dephospho-CoA + GTP = GDP + CoA + H(+). It participates in cofactor biosynthesis; coenzyme A biosynthesis. Functionally, catalyzes the GTP-dependent phosphorylation of the 3'-hydroxyl group of dephosphocoenzyme A to form coenzyme A (CoA). The sequence is that of GTP-dependent dephospho-CoA kinase from Methanosarcina mazei (strain ATCC BAA-159 / DSM 3647 / Goe1 / Go1 / JCM 11833 / OCM 88) (Methanosarcina frisia).